Consider the following 420-residue polypeptide: D-tagatose-1,6-bisphosphate aldolase subunit GatZ (420 aa).

This sequence belongs to the GatZ/KbaZ family. GatZ subfamily. Forms a complex with GatY.

It participates in carbohydrate metabolism; D-tagatose 6-phosphate degradation; D-glyceraldehyde 3-phosphate and glycerone phosphate from D-tagatose 6-phosphate: step 2/2. Component of the tagatose-1,6-bisphosphate aldolase GatYZ that is required for full activity and stability of the Y subunit. Could have a chaperone-like function for the proper and stable folding of GatY. When expressed alone, GatZ does not show any aldolase activity. Is involved in the catabolism of galactitol. This chain is D-tagatose-1,6-bisphosphate aldolase subunit GatZ, found in Escherichia coli O6:H1 (strain CFT073 / ATCC 700928 / UPEC).